The following is a 294-amino-acid chain: 4-hydroxy-tetrahydrodipicolinate synthase (294 aa).

A pyruvate-binding site is contributed by Thr-45. Tyr-133 functions as the Proton donor/acceptor in the catalytic mechanism. The Schiff-base intermediate with substrate role is filled by Lys-162. Val-204 serves as a coordination point for pyruvate.

The protein belongs to the DapA family. As to quaternary structure, homotetramer; dimer of dimers.

The protein resides in the cytoplasm. It carries out the reaction L-aspartate 4-semialdehyde + pyruvate = (2S,4S)-4-hydroxy-2,3,4,5-tetrahydrodipicolinate + H2O + H(+). It participates in amino-acid biosynthesis; L-lysine biosynthesis via DAP pathway; (S)-tetrahydrodipicolinate from L-aspartate: step 3/4. In terms of biological role, catalyzes the condensation of (S)-aspartate-beta-semialdehyde [(S)-ASA] and pyruvate to 4-hydroxy-tetrahydrodipicolinate (HTPA). This chain is 4-hydroxy-tetrahydrodipicolinate synthase, found in Bartonella bacilliformis (strain ATCC 35685 / KC583 / Herrer 020/F12,63).